We begin with the raw amino-acid sequence, 347 residues long: GMP reductase (347 aa).

NADP(+) is bound at residue Thr-108–Ala-131. Positions 181 and 183 each coordinate K(+). The active-site Thioimidate intermediate is the Cys-186. NADP(+) is bound at residue Ile-216–Val-239.

It belongs to the IMPDH/GMPR family. GuaC type 1 subfamily. As to quaternary structure, homotetramer.

The enzyme catalyses IMP + NH4(+) + NADP(+) = GMP + NADPH + 2 H(+). In terms of biological role, catalyzes the irreversible NADPH-dependent deamination of GMP to IMP. It functions in the conversion of nucleobase, nucleoside and nucleotide derivatives of G to A nucleotides, and in maintaining the intracellular balance of A and G nucleotides. The chain is GMP reductase from Shewanella pealeana (strain ATCC 700345 / ANG-SQ1).